The sequence spans 382 residues: ATP phosphoribosyltransferase regulatory subunit (382 aa).

This sequence belongs to the class-II aminoacyl-tRNA synthetase family. HisZ subfamily. In terms of assembly, heteromultimer composed of HisG and HisZ subunits.

It is found in the cytoplasm. It participates in amino-acid biosynthesis; L-histidine biosynthesis; L-histidine from 5-phospho-alpha-D-ribose 1-diphosphate: step 1/9. Its function is as follows. Required for the first step of histidine biosynthesis. May allow the feedback regulation of ATP phosphoribosyltransferase activity by histidine. This Lacticaseibacillus paracasei (strain ATCC 334 / BCRC 17002 / CCUG 31169 / CIP 107868 / KCTC 3260 / NRRL B-441) (Lactobacillus paracasei) protein is ATP phosphoribosyltransferase regulatory subunit.